Reading from the N-terminus, the 455-residue chain is Peroxisomal membrane protein PEX3 (455 aa).

Residues threonine 113 to glycine 125 show a composition bias toward polar residues. The tract at residues threonine 113–proline 135 is disordered. Residues phenylalanine 155–leucine 171 traverse the membrane as a helical segment.

Belongs to the peroxin-3 family. As to quaternary structure, component of the peroxisomal docking complex, composed of at least PEX3, PEX13, PEX14 and PEX17. Component of the peroxisomal translocation complex, composed of at least PEX3, PEX2, PEX10 and PEX12. Interacts with PEX19. Interacts with the pexophagy receptor ATG30.

It is found in the peroxisome membrane. Peroxisomal membrane protein required for peroxisome biosynthesis. Shared component of both the peroxisomal docking complex and the peroxisomal translocation complex. The two types of peroxisomal matrix targeting signals, PTS1 and PTS2, are first recognized in the cytosol by their receptors PEX5 and PEX7, respectively, which then carry the cargo to the peroxisomal membrane. The peroxisomal targeting signal (PTS) receptor-cargo complexes interact with peroxisomal membrane protein (PMP) components of the docking complex. They have then additional downstream interactions with the translocation complex, leading to the transport of fully folded and oligomerized cargo into the peroxisome matrix. PEX3 acts as an anchoring site for PEX19 on the peroxisomal membrane and thus plays a crucial role in the assembly of the peroxisomal translocation complex. Is also essential for the interaction between the two complexes. Finally. PEX3 activates selective autophagy of peroxisomes (pexophagy) via interaction with the pexophagy receptor ATG30. The chain is Peroxisomal membrane protein PEX3 from Komagataella phaffii (strain GS115 / ATCC 20864) (Yeast).